The primary structure comprises 103 residues: Cell division protein FtsB (103 aa).

The Cytoplasmic portion of the chain corresponds to Met-1–Lys-3. The chain crosses the membrane as a helical span at residues Leu-4–Phe-21. At Gly-22 to Arg-103 the chain is on the periplasmic side. The stretch at Val-38–Gly-62 forms a coiled coil.

It belongs to the FtsB family. Part of a complex composed of FtsB, FtsL and FtsQ.

The protein localises to the cell inner membrane. Its function is as follows. Essential cell division protein. May link together the upstream cell division proteins, which are predominantly cytoplasmic, with the downstream cell division proteins, which are predominantly periplasmic. The polypeptide is Cell division protein FtsB (Cronobacter sakazakii (strain ATCC BAA-894) (Enterobacter sakazakii)).